The following is a 340-amino-acid chain: Biotin synthase (340 aa).

In terms of domain architecture, Radical SAM core spans 45-272 (NAVQVSTLLS…ASYVRLSAGR (228 aa)). Residues C60, C64, and C67 each contribute to the [4Fe-4S] cluster site. 4 residues coordinate [2Fe-2S] cluster: C104, C135, C195, and R267.

This sequence belongs to the radical SAM superfamily. Biotin synthase family. Homodimer. The cofactor is [4Fe-4S] cluster. [2Fe-2S] cluster serves as cofactor.

It catalyses the reaction (4R,5S)-dethiobiotin + (sulfur carrier)-SH + 2 reduced [2Fe-2S]-[ferredoxin] + 2 S-adenosyl-L-methionine = (sulfur carrier)-H + biotin + 2 5'-deoxyadenosine + 2 L-methionine + 2 oxidized [2Fe-2S]-[ferredoxin]. The protein operates within cofactor biosynthesis; biotin biosynthesis; biotin from 7,8-diaminononanoate: step 2/2. In terms of biological role, catalyzes the conversion of dethiobiotin (DTB) to biotin by the insertion of a sulfur atom into dethiobiotin via a radical-based mechanism. This is Biotin synthase from Thioalkalivibrio sulfidiphilus (strain HL-EbGR7).